The sequence spans 151 residues: 16.9 kDa class I heat shock protein 1 (151 aa).

The region spanning 37–151 is the sHSP domain; it reads ETAAFANARV…PEVKAIEISG (115 aa).

The protein belongs to the small heat shock protein (HSP20) family. May form oligomeric structures.

The protein localises to the cytoplasm. This is 16.9 kDa class I heat shock protein 1 (hsp16.9A) from Triticum aestivum (Wheat).